The following is a 146-amino-acid chain: Large ribosomal subunit protein uL15 (146 aa).

Residues 1-10 show a composition bias toward basic and acidic residues; that stretch reads MTIKLHDLKP. A disordered region spans residues 1 to 52; the sequence is MTIKLHDLKPARGSKTPRTRVGRGEGSKGKTAGRGTKGTKARKNVPVTFEGG.

The protein belongs to the universal ribosomal protein uL15 family. Part of the 50S ribosomal subunit.

In terms of biological role, binds to the 23S rRNA. In Mycolicibacterium paratuberculosis (strain ATCC BAA-968 / K-10) (Mycobacterium paratuberculosis), this protein is Large ribosomal subunit protein uL15.